Consider the following 156-residue polypeptide: Sensor histidine kinase component HK2 (156 aa).

At 1–42 (MALVLAAAGAVTVVQFRDAAHEADPDGALRGLTDDITADLVR) the chain is on the extracellular side. The chain crosses the membrane as a helical span at residues 43–63 (ELVTILPIVLVIAAVAAYLLS). An HAMP domain is found at 64-120 (RAALRPVDRIRAAAQTLTTTPHPDTDAPLPVPPTDDEIAWLATTLNTMLTRLQRALA). Residues 64 to 156 (RAALRPVDRI…RCAGPDPPTS (93 aa)) lie on the Cytoplasmic side of the membrane. A Histidine kinase; first part domain is found at 128 to 156 (DASHELRTPLALLTTELELRCAGPDPPTS). H131 carries the phosphohistidine; by autocatalysis modification.

Homodimer. Each monomer interacts with HK1 and the receiver domain of TcrA. Post-translationally, phosphorylated by HK1.

The protein resides in the cell membrane. The catalysed reaction is ATP + protein L-histidine = ADP + protein N-phospho-L-histidine.. Functionally, member of the three-protein two-component system HK1/HK2/TcrA. HK2 transfers its phosphoryl group to TcrA. This Mycobacterium tuberculosis (strain ATCC 25618 / H37Rv) protein is Sensor histidine kinase component HK2.